A 521-amino-acid polypeptide reads, in one-letter code: Vang-like protein 2-B (521 aa).

Residues 1–18 (MDNDSQYSGYSYKSGQSR) are compositionally biased toward low complexity. A disordered region spans residues 1–73 (MDNDSQYSGY…RDDNWGETTT (73 aa)). The Cytoplasmic segment spans residues 1-108 (MDNDSQYSGY…AKLDCSRHLG (108 aa)). The span at 19–33 (SSRKHRDRRERHRSK) shows a compositional bias: basic residues. A compositionally biased stretch (basic and acidic residues) spans 57–67 (ESTRGEDRDDN). A helical membrane pass occupies residues 109–129 (VVIAGALALLSFLTPIAFMLL). Residues 130-147 (PQILWREDLEQCGTACEG) lie on the Extracellular side of the membrane. Residues 148 to 168 (LFISVAFKLLILLLGSWALFF) traverse the membrane as a helical segment. Residues 169-178 (RRPKAFFPRV) lie on the Cytoplasmic side of the membrane. Residues 179 to 199 (FVFRALLMVLVFLLVVSYWLF) form a helical membrane-spanning segment. Residues 200–218 (YGVRILESRDKNYQGIVQY) lie on the Extracellular side of the membrane. The chain crosses the membrane as a helical span at residues 219-239 (AVSLVDALLFVHYLAVVLLEL). The Cytoplasmic portion of the chain corresponds to 240-521 (RQLQPQFTIK…VMRLQSETSV (282 aa)). The short motif at 518-521 (ETSV) is the PDZ-binding element.

The protein belongs to the Vang family. In terms of assembly, interacts with dvl/dsh. Interacts with prickle3. During gastrulation, broadly expressed in the dorsal region in both mesodermal and neural tissues. From the neurula stages, expressed throughout the neural tube. In tailbud stages, expression declines in the anterior notochord but remains strong in the posterior notochord and in the neural tube. Also weakly expressed in the prenephritic region of late tailbud embryos.

It is found in the cell membrane. Functionally, has a role in non-canonical Wnt/planar cell polarity (PCP) signaling; can recruit dvl/dsh and prickle from the cytoplasm to the plasma membrane. Acts in a PCP complex to regulate the polarized assembly of fibronectrin on the surface of the mesoderm during gastrulation. Regulates convergent extension in both dorsal mesoderm and neural tissue without affecting cell fate. Regulates neural fold closure during neurulation. May be required for cell surface localization of fzd3 and fzd6 in the inner ear. The sequence is that of Vang-like protein 2-B (vangl2-b) from Xenopus laevis (African clawed frog).